The primary structure comprises 634 residues: Chaperone protein HtpG (634 aa).

Residues 1–342 (MSVETQKETL…SNDLSLNVSR (342 aa)) form an a; substrate-binding region. Residues 343–559 (EILQKDPVID…EQDLGLQMRQ (217 aa)) are b. The c stretch occupies residues 560-634 (ILEASGQKVP…LNKLLVELSA (75 aa)).

Belongs to the heat shock protein 90 family. As to quaternary structure, homodimer.

Its subcellular location is the cytoplasm. Molecular chaperone. Has ATPase activity. This is Chaperone protein HtpG from Ectopseudomonas mendocina (strain ymp) (Pseudomonas mendocina).